Here is a 1447-residue protein sequence, read N- to C-terminus: DNA topoisomerase 2 (1447 aa).

Residues Asn72, Asn101, 129 to 131 (SSN), and 142 to 149 (GRNGYGAK) contribute to the ATP site. Residues 323–325 (KKK) are interaction with DNA. 357–359 (QTK) is an ATP binding site. A Toprim domain is found at 435-552 (CTLILTEGDS…ELLRLPFLEE (118 aa)). 3 residues coordinate Mg(2+): Glu441, Asp521, and Asp523. Positions 695 to 1169 (IPSLVDGLKP…TPEMLWLDDL (475 aa)) constitute a Topo IIA-type catalytic domain. Catalysis depends on Tyr785, which acts as the O-(5'-phospho-DNA)-tyrosine intermediate. The interaction with DNA stretch occupies residues 972–981 (KLTTTLSTNQ). Disordered regions lie at residues 1079 to 1110 (EDAEQADEEDEEEEEAAPSVSSKAKKEKEVDP), 1183 to 1231 (ERAE…DGEP), and 1246 to 1447 (AAAK…DFNC). The span at 1081–1094 (AEQADEEDEEEEEA) shows a compositional bias: acidic residues. Residues 1255–1281 (KEPKKPKEPKEPKVKKEPKGKQIKAEP) are compositionally biased toward basic and acidic residues. The span at 1283-1293 (ASGDEVDEFDA) shows a compositional bias: acidic residues. Position 1284 is a phosphoserine (Ser1284). Basic and acidic residues-rich tracts occupy residues 1310 to 1325 (VKKEPGEKKPRQKKEN) and 1332 to 1359 (SKIDFSKAKAKKSDDDVEEVTPRAERPG). The residue at position 1344 (Ser1344) is a Phosphoserine. A Phosphothreonine modification is found at Thr1352. Ser1374, Ser1385, Ser1392, and Ser1396 each carry phosphoserine. Residues 1374 to 1394 (SDEEEDGGNVGSDDDGNASDD) are compositionally biased toward acidic residues. Positions 1395–1408 (DSPKRPAKRGREDE) are enriched in basic and acidic residues. The segment covering 1413-1423 (AKKKAPPKKRR) has biased composition (basic residues). The segment covering 1427–1447 (ESDDDDIEIDEDDDDDSDFNC) has biased composition (acidic residues).

Belongs to the type II topoisomerase family. As to quaternary structure, homodimer. Interacts with mod(mdg4). Interacts with barr. Interacts with ph-p. Interacts with mle; the interaction mediates association with the MSL dosage compensation complex. Mg(2+) is required as a cofactor. Mn(2+) serves as cofactor. Requires Ca(2+) as cofactor. Phosphorylated. Phosphorylation by casein kinase II enhances ATPase activity.

The protein resides in the nucleus. It localises to the chromosome. Its subcellular location is the cytoplasm. It carries out the reaction ATP-dependent breakage, passage and rejoining of double-stranded DNA.. Functionally, control of topological states of DNA by transient breakage and subsequent rejoining of DNA strands. Topoisomerase II makes double-strand breaks. Essential during mitosis and meiosis for proper segregation of daughter chromosomes. During meiosis, it disrupts heterochromatic connections between achiasmate and chiasmate homologs after spindle assembly so that chromosomes can separate at prometaphase I. During mitosis, it functions in the separation of sister chromatids by establishing amphitelic kinetochore attachments in mitotic spindles. May have a role in chromatin condensation and chromosome structure. May be involved in X-chromosome dosage compensation, perhaps by modifying the topological state of compensated genes. Regulates activity of the gypsy chromatin insulator complex by binding to mod(mdg4) and preventing its degradation. The chain is DNA topoisomerase 2 from Drosophila melanogaster (Fruit fly).